A 76-amino-acid chain; its full sequence is Repressor protein of division inhibition gene dicB (76 aa).

Residues 13–33 mediate DNA binding; it reads KTKLAQAAGIRLASLYSWKGD.

Its function is as follows. This protein is a repressor of division inhibition gene dicB. This Escherichia coli (strain K12) protein is Repressor protein of division inhibition gene dicB (dicC).